The sequence spans 1836 residues: Sodium channel protein type 4 subunit alpha (1836 aa).

The Cytoplasmic portion of the chain corresponds to 1–131; the sequence is MARPSLCTLV…RGAIKVLIHA (131 aa). A compositionally biased stretch (basic and acidic residues) spans 39–60; it reads LQRNKQMEIEEPERKPRSDLEA. The segment at 39 to 63 is disordered; sequence LQRNKQMEIEEPERKPRSDLEAGKN. The I repeat unit spans residues 113-454; that stretch reads LLSPFSVVRR…VVAMAYAEQN (342 aa). The helical transmembrane segment at 132-150 threads the bilayer; sequence LFSMFIMITILTNCVFMTM. Over 151–157 the chain is Extracellular; the sequence is SDPPPWS. A helical membrane pass occupies residues 158-178; the sequence is KNVEYTFTGIYTFESLIKILA. Topologically, residues 179–192 are cytoplasmic; sequence RGFCVDDFTFLRDP. A helical membrane pass occupies residues 193-210; that stretch reads WNWLDFSVIMMAYLTEFV. Over 211 to 216 the chain is Extracellular; that stretch reads DLGNIS. Residue asparagine 214 is glycosylated (N-linked (GlcNAc...) asparagine). Residues 217 to 233 traverse the membrane as a helical segment; that stretch reads ALRTFRVLRALKTITVI. The Cytoplasmic portion of the chain corresponds to 234-252; sequence PGLKTIVGALIQSVKKLSD. Residues 253–272 form a helical membrane-spanning segment; it reads VMILTVFCLSVFALVGLQLF. At 273–391 the chain is on the extracellular side; the sequence is MGNLRQKCVR…PNYGYTSYDT (119 aa). Residues cysteine 280 and cysteine 360 are joined by a disulfide bond. N-linked (GlcNAc...) asparagine glycans are attached at residues asparagine 288, asparagine 291, asparagine 297, asparagine 303, asparagine 315, asparagine 321, asparagine 333, and asparagine 362. A disulfide bridge connects residues cysteine 369 and cysteine 375. Residues 392 to 416 constitute an intramembrane region (pore-forming); the sequence is FSWAFLALFRLMTQDYWENLFQLTL. Residues 417–423 are Extracellular-facing; it reads RAAGKTY. Residues 424-444 form a helical membrane-spanning segment; sequence MIFFVVIIFLGSFYLINLILA. Residues 445 to 578 lie on the Cytoplasmic side of the membrane; that stretch reads VVAMAYAEQN…NIIHLIVMDP (134 aa). The interval 493–530 is disordered; sequence GGEADGDPAHGKDCNGSLDTSQGEKGAPRQSSSGDSGI. Residues 509–528 are compositionally biased toward polar residues; it reads SLDTSQGEKGAPRQSSSGDS. The II repeat unit spans residues 560 to 832; sequence CCAPWLKFKN…QIAIGRIKLG (273 aa). Residues 579–597 traverse the membrane as a helical segment; that stretch reads FVDLGITICIVLNTLFMAM. Residues 598 to 608 are Extracellular-facing; that stretch reads EHYPMTEHFDN. Residues 609–628 traverse the membrane as a helical segment; it reads VLTVGNLVFTGIFTAEMVLK. The Cytoplasmic segment spans residues 629 to 642; that stretch reads LIAMDPYEYFQQGW. A helical transmembrane segment spans residues 643–662; the sequence is NIFDSIIVTLSLVELGLANV. At 663–664 the chain is on the extracellular side; the sequence is QG. The chain crosses the membrane as a helical span at residues 665-682; that stretch reads LSVLRSFRLLRVFKLAKS. At 683–698 the chain is on the cytoplasmic side; that stretch reads WPTLNMLIKIIGNSVG. A helical transmembrane segment spans residues 699–717; sequence ALGNLTLVLAIIVFIFAVV. Residues 718–746 are Extracellular-facing; the sequence is GMQLFGKSYKECVCKIALDCNLPRWHMHD. The cysteines at positions 731 and 737 are disulfide-linked. The segment at residues 747–767 is an intramembrane region (pore-forming); sequence FFHSFLIVFRILCGEWIETMW. Residues 768 to 778 lie on the Extracellular side of the membrane; the sequence is DCMEVAGQAMC. Cysteine 769 and cysteine 778 form a disulfide bridge. Residues 779–797 traverse the membrane as a helical segment; it reads LTVFLMVMVIGNLVVLNLF. At 798–1032 the chain is on the cytoplasmic side; the sequence is LALLLSSFSA…ACFKIVEHNW (235 aa). Disordered stretches follow at residues 863 to 885 and 930 to 992; these read GAGE…PPEE and ESDL…QPEE. Residues 876 to 885 show a composition bias toward basic and acidic residues; that stretch reads EDEKKEPPEE. Acidic residues-rich tracts occupy residues 930–947 and 975–992; these read ESDL…FSEP and EDPE…QPEE. An III repeat occupies 1013–1326; sequence RGKKWWTLRR…KKYYNAMKKL (314 aa). A helical transmembrane segment spans residues 1033 to 1050; the sequence is FETFIVFMILLSSGALAF. The Extracellular segment spans residues 1051–1063; that stretch reads EDIYIEQRRVIRT. Residues 1064–1082 form a helical membrane-spanning segment; that stretch reads ILEYADKVFTYIFIMEMLL. The Cytoplasmic segment spans residues 1083–1096; the sequence is KWVAYGFKVYFTNA. Residues 1097–1115 traverse the membrane as a helical segment; sequence WCWLDFLIVDVSIISLVAN. Topologically, residues 1116–1123 are extracellular; it reads WLGYSELG. Residues 1124–1142 form a helical membrane-spanning segment; that stretch reads PIKSLRTLRALRPLRALSR. Residues 1143-1159 lie on the Cytoplasmic side of the membrane; the sequence is FEGMRVVVNALLGAIPS. A helical membrane pass occupies residues 1160-1179; that stretch reads IMNVLLVCLIFWLIFSIMGV. The Extracellular portion of the chain corresponds to 1180–1230; sequence NLFAGKFYYCINTTTSERFDISEVNNKSECESLMHTGQVRWLNVKVNYDNV. A disulfide bridge connects residues cysteine 1189 and cysteine 1209. 2 N-linked (GlcNAc...) asparagine glycosylation sites follow: asparagine 1191 and asparagine 1205. Residues 1231–1252 constitute an intramembrane region (pore-forming); that stretch reads GLGYLSLLQVATFKGWMDIMYA. At 1253 to 1269 the chain is on the extracellular side; that stretch reads AVDSREKEEQPQYEVNL. Residues 1270 to 1291 form a helical membrane-spanning segment; that stretch reads YMYLYFVIFIIFGSFFTLNLFI. Topologically, residues 1292 to 1354 are cytoplasmic; sequence GVIIDNFNQQ…MVYDLVTKQA (63 aa). The tract at residues 1310–1312 is important for rapid channel inactivation; the sequence is IFM. The IV repeat unit spans residues 1335–1633; it reads IPRPQNKIQG…WEKFDPDATQ (299 aa). A helical membrane pass occupies residues 1355–1372; the sequence is FDITIMILICLNMVTMMV. Residues 1373–1383 are Extracellular-facing; it reads ETDNQSQLKVD. A helical membrane pass occupies residues 1384 to 1402; sequence ILYNINMIFIIIFTGECVL. Residues 1403–1414 are Cytoplasmic-facing; it reads KMLALRQYYFTV. A helical membrane pass occupies residues 1415–1432; that stretch reads GWNIFDFVVVILSIVGLA. Topologically, residues 1433-1445 are extracellular; it reads LSDLIQKYFVSPT. A helical transmembrane segment spans residues 1446–1462; it reads LFRVIRLARIGRVLRLI. At 1463–1481 the chain is on the cytoplasmic side; that stretch reads RGAKGIRTLLFALMMSLPA. The chain crosses the membrane as a helical span at residues 1482-1499; that stretch reads LFNIGLLLFLVMFIYSIF. At 1500–1521 the chain is on the extracellular side; that stretch reads GMSNFAYVKKESGIDDMFNFET. Positions 1522-1544 form an intramembrane region, pore-forming; the sequence is FGNSIICLFEITTSAGWDGLLNP. At 1545–1574 the chain is on the extracellular side; that stretch reads ILNSGPPDCDPNLENPGTSVKGDCGNPSIG. Cysteine 1553 and cysteine 1568 are oxidised to a cystine. Residues 1575 to 1597 traverse the membrane as a helical segment; that stretch reads ICFFCSYIIISFLIVVNMYIAII. Over 1598–1836 the chain is Cytoplasmic; that stretch reads LENFNVATEE…VRPGVKESLV (239 aa). Residues 1727 to 1756 form the IQ domain; it reads EEVCAIKIQRAYRRHLLQRSMKQASYMYRH. A disordered region spans residues 1778–1836; sequence KMYGHENGNSSSPSPEEKGEAGDAGPTMGLMPISPSDTAWPPAPPPGQTVRPGVKESLV.

The protein belongs to the sodium channel (TC 1.A.1.10) family. Nav1.4/SCN4A subfamily. The Nav1.4 voltage-gated sodium channel consists of an ion-conducting alpha subunit SCN4A which is functional on its own and a regulatory beta subunit SCN1B. SCN1B strongly enhances the presence of SCN4A at the cell surface. SCN1B is also required for rapid channel inactivation and recovery after inactivation. It prevents the decrease of channel activity in response to repetitive, high-frequency depolarizations. Interacts with the syntrophins SNTA1, SNTB1 and SNTB2 (via PDZ domain); probably links SCN4A to the actin cytoskeleton and the extracellular matrix via the dystrophin-associated protein complex and regulates its localization in muscle cells. Interacts with TMEM233; probable regulator of the channel.

It localises to the cell membrane. It carries out the reaction Na(+)(in) = Na(+)(out). With respect to regulation, the channel is inhibited by tetrodotoxin and saxitoxin. Inhibited by the conotoxin GVIIJ. In terms of biological role, pore-forming subunit of Nav1.4, a voltage-gated sodium (Nav) channel that directly mediates the depolarizing phase of action potentials in excitable membranes. Navs, also called VGSCs (voltage-gated sodium channels) or VDSCs (voltage-dependent sodium channels), operate by switching between closed and open conformations depending on the voltage difference across the membrane. In the open conformation they allow Na(+) ions to selectively pass through the pore, along their electrochemical gradient. The influx of Na+ ions provokes membrane depolarization, initiating the propagation of electrical signals throughout cells and tissues. Highly expressed in skeletal muscles, Nav1.4 generates the action potential crucial for muscle contraction. The polypeptide is Sodium channel protein type 4 subunit alpha (Homo sapiens (Human)).